Consider the following 292-residue polypeptide: CCR4-NOT transcription complex subunit 8 (292 aa).

4 residues coordinate a divalent metal cation: D40, E42, D161, and D230.

This sequence belongs to the CAF1 family. As to quaternary structure, component of the CCR4-NOT complex; distinct complexes seem to exist that differ in the participation of probably mutually exclusive catalytic subunits; the complex contains two deadenylase subunits, CNOT6 or CNOT6L, and CNOT7 or CNOT8. In the complex interacts directly with CNOT1. Interacts with BTG1, BTG2 and TOB1. Interacts with BTG4.

Its subcellular location is the cytoplasm. The protein resides in the nucleus. It carries out the reaction Exonucleolytic cleavage of poly(A) to 5'-AMP.. In terms of biological role, has 3'-5' poly(A) exoribonuclease activity for synthetic poly(A) RNA substrate. Its function seems to be partially redundant with that of CNOT7. Catalytic component of the CCR4-NOT complex which is linked to various cellular processes including bulk mRNA degradation, miRNA-mediated repression, translational repression during translational initiation and general transcription regulation. During miRNA-mediated repression the complex also seems to act as translational repressor during translational initiation. Additional complex functions may be a consequence of its influence on mRNA expression. Associates with members of the BTG family such as TOB1 and BTG2 and is required for their anti-proliferative activity. In Mus musculus (Mouse), this protein is CCR4-NOT transcription complex subunit 8 (Cnot8).